Reading from the N-terminus, the 89-residue chain is Small ribosomal subunit protein uS14A (89 aa).

The protein belongs to the universal ribosomal protein uS14 family. In terms of assembly, part of the 30S ribosomal subunit. Contacts proteins S3 and S10.

Functionally, binds 16S rRNA, required for the assembly of 30S particles and may also be responsible for determining the conformation of the 16S rRNA at the A site. The protein is Small ribosomal subunit protein uS14A of Oceanobacillus iheyensis (strain DSM 14371 / CIP 107618 / JCM 11309 / KCTC 3954 / HTE831).